Reading from the N-terminus, the 298-residue chain is Glycine--tRNA ligase alpha subunit (298 aa).

The protein belongs to the class-II aminoacyl-tRNA synthetase family. Tetramer of two alpha and two beta subunits.

It is found in the cytoplasm. The enzyme catalyses tRNA(Gly) + glycine + ATP = glycyl-tRNA(Gly) + AMP + diphosphate. The protein is Glycine--tRNA ligase alpha subunit of Helicobacter pylori (strain G27).